The following is a 42-amino-acid chain: Purine nucleoside phosphorylase DeoD-type (42 aa).

8-9 is an a purine D-ribonucleoside binding site; sequence SD. Catalysis depends on Asp-9, which acts as the Proton donor.

It belongs to the PNP/UDP phosphorylase family. As to quaternary structure, homohexamer; trimer of homodimers.

It carries out the reaction a purine D-ribonucleoside + phosphate = a purine nucleobase + alpha-D-ribose 1-phosphate. The enzyme catalyses a purine 2'-deoxy-D-ribonucleoside + phosphate = a purine nucleobase + 2-deoxy-alpha-D-ribose 1-phosphate. In terms of biological role, catalyzes the reversible phosphorolytic breakdown of the N-glycosidic bond in the beta-(deoxy)ribonucleoside molecules, with the formation of the corresponding free purine bases and pentose-1-phosphate. This is Purine nucleoside phosphorylase DeoD-type from Mycoplasmoides pirum (Mycoplasma pirum).